The following is a 632-amino-acid chain: 1,4-alpha-glucan branching enzyme GlgB (632 aa).

The Nucleophile role is filled by aspartate 310. The Proton donor role is filled by glutamate 363.

Belongs to the glycosyl hydrolase 13 family. GlgB subfamily. In terms of assembly, monomer.

It catalyses the reaction Transfers a segment of a (1-&gt;4)-alpha-D-glucan chain to a primary hydroxy group in a similar glucan chain.. Its pathway is glycan biosynthesis; glycogen biosynthesis. In terms of biological role, catalyzes the formation of the alpha-1,6-glucosidic linkages in glycogen by scission of a 1,4-alpha-linked oligosaccharide from growing alpha-1,4-glucan chains and the subsequent attachment of the oligosaccharide to the alpha-1,6 position. This is 1,4-alpha-glucan branching enzyme GlgB from Desulfitobacterium hafniense (strain Y51).